Reading from the N-terminus, the 328-residue chain is Tetraacyldisaccharide 4'-kinase (328 aa).

55–62 is an ATP binding site; sequence TAGGNGKT.

Belongs to the LpxK family.

It carries out the reaction a lipid A disaccharide + ATP = a lipid IVA + ADP + H(+). It functions in the pathway glycolipid biosynthesis; lipid IV(A) biosynthesis; lipid IV(A) from (3R)-3-hydroxytetradecanoyl-[acyl-carrier-protein] and UDP-N-acetyl-alpha-D-glucosamine: step 6/6. Its function is as follows. Transfers the gamma-phosphate of ATP to the 4'-position of a tetraacyldisaccharide 1-phosphate intermediate (termed DS-1-P) to form tetraacyldisaccharide 1,4'-bis-phosphate (lipid IVA). The polypeptide is Tetraacyldisaccharide 4'-kinase (Escherichia coli O139:H28 (strain E24377A / ETEC)).